The sequence spans 445 residues: Acyl-CoA Delta-4 desaturase (445 aa).

The region spanning 19–96 is the Cytochrome b5 heme-binding domain; sequence AGVYTWEEVQ…MKPLLVGELA (78 aa). The next 4 helical transmembrane spans lie at 132–152, 153–173, 266–286, and 307–327; these read LFFLLHLGHILLLEALALLMV, WHWGTGWLQTLLCAVMLATAQ, YFFLVAPPLLIPVFYNYNIMM, and YMLCYVPVYGLFGSLALMMFA.

This sequence belongs to the fatty acid desaturase type 1 family.

It localises to the membrane. It carries out the reaction (8Z,11Z,14Z,17Z)-eicosatetraenoyl-CoA + 2 Fe(II)-[cytochrome b5] + O2 + 2 H(+) = (5Z,8Z,11Z,14Z,17Z)-eicosapentaenoyl-CoA + 2 Fe(III)-[cytochrome b5] + 2 H2O. The catalysed reaction is (7Z,10Z,13Z,16Z)-docosatetraenoyl-CoA + 2 Fe(II)-[cytochrome b5] + O2 + 2 H(+) = (4Z,7Z,10Z,13Z,16Z)-docosapentaenoyl-CoA + 2 Fe(III)-[cytochrome b5] + 2 H2O. The enzyme catalyses (7Z,10Z,13Z,16Z,19Z)-docosapentaenoyl-CoA + 2 Fe(II)-[cytochrome b5] + O2 + 2 H(+) = (4Z,7Z,10Z,13Z,16Z,19Z)-docosahexaenoyl-CoA + 2 Fe(III)-[cytochrome b5] + 2 H2O. It functions in the pathway lipid metabolism; polyunsaturated fatty acid biosynthesis. Fatty acid desaturase with bifunctional delta-4 and delta-5 activities. Component of a lipid metabolic pathway that catalyzes the biosynthesis of polyunsaturated fatty acids (PUFA) with preference toward n-3 substrates and Delta(4)function. This chain is Acyl-CoA Delta-4 desaturase, found in Siganus canaliculatus (White-spotted spinefoot).